The chain runs to 867 residues: Cadherin-related family member 1 (867 aa).

Positions 1–21 are cleaved as a signal peptide; the sequence is MGRGPPAVLAPWMLFLSLAQA. Over 22-701 the chain is Extracellular; that stretch reads NFAPHFFDNG…LMQTKDNPMK (680 aa). Cadherin domains are found at residues 36–135, 136–247, 248–354, 360–473, 474–577, and 574–689; these read NGNM…APRF, IQEP…GPVF, VGTP…PPTF, PQNR…VPKF, TSHY…YPQF, and YPQF…SPMA. N-linked (GlcNAc...) asparagine glycosylation is found at Asn-58 and Asn-89. Asn-288 and Asn-297 each carry an N-linked (GlcNAc...) asparagine glycan. Residues 702 to 722 traverse the membrane as a helical segment; that stretch reads AVGVLAGIMAIIVAITVLIST. At 723-867 the chain is on the cytoplasmic side; it reads ATFWRNKKSN…KKNLHSKAYF (145 aa). Residues 767-843 form a disordered region; the sequence is KFVLREAPPN…VAKRKAVGSP (77 aa). A compositionally biased stretch (polar residues) spans 777-786; sequence ENCNNNSRGS. Residues 790 to 802 are compositionally biased toward pro residues; that stretch reads PQAPAPPPPPSPA.

As to quaternary structure, interacts with PROM1. Post-translationally, undergoes proteolytic cleavage; produces a soluble 95 kDa N-terminal fragment and a 25 kDa cell-associated C-terminal fragment. In terms of tissue distribution, expressed in photoreceptor cells of the outer nuclear layer of the retina.

It localises to the cell membrane. Functionally, potential calcium-dependent cell-adhesion protein. May be required for the structural integrity of the outer segment (OS) of photoreceptor cells. This Bos taurus (Bovine) protein is Cadherin-related family member 1 (CDHR1).